Consider the following 341-residue polypeptide: Probable cytosolic iron-sulfur protein assembly protein Ciao1 (341 aa).

WD repeat units lie at residues glycine 12–alanine 51, glycine 58–asparagine 97, glycine 102–aspartate 141, glycine 151–glutamate 190, serine 197–glycine 236, tyrosine 255–glutamate 294, and alanine 305–aspartate 341.

The protein belongs to the WD repeat CIA1 family.

Functionally, essential component of the cytosolic iron-sulfur (Fe/S) protein assembly machinery. Required for the maturation of extramitochondrial Fe/S proteins. This is Probable cytosolic iron-sulfur protein assembly protein Ciao1 from Anopheles gambiae (African malaria mosquito).